A 608-amino-acid polypeptide reads, in one-letter code: Elongation factor 4 (608 aa).

The region spanning 11–193 (KKIRNFSIIA…QIVEKVPEPS (183 aa)) is the tr-type G domain. Residues 23–28 (DHGKST) and 140–143 (NKID) contribute to the GTP site.

It belongs to the TRAFAC class translation factor GTPase superfamily. Classic translation factor GTPase family. LepA subfamily.

It is found in the cell membrane. The enzyme catalyses GTP + H2O = GDP + phosphate + H(+). Required for accurate and efficient protein synthesis under certain stress conditions. May act as a fidelity factor of the translation reaction, by catalyzing a one-codon backward translocation of tRNAs on improperly translocated ribosomes. Back-translocation proceeds from a post-translocation (POST) complex to a pre-translocation (PRE) complex, thus giving elongation factor G a second chance to translocate the tRNAs correctly. Binds to ribosomes in a GTP-dependent manner. In Listeria welshimeri serovar 6b (strain ATCC 35897 / DSM 20650 / CCUG 15529 / CIP 8149 / NCTC 11857 / SLCC 5334 / V8), this protein is Elongation factor 4.